A 294-amino-acid chain; its full sequence is Release factor glutamine methyltransferase (294 aa).

Residues 131 to 135, D154, and N202 each bind S-adenosyl-L-methionine; that span reads GTGSG. 202–205 contacts substrate; the sequence is NPPY.

This sequence belongs to the protein N5-glutamine methyltransferase family. PrmC subfamily.

The enzyme catalyses L-glutaminyl-[peptide chain release factor] + S-adenosyl-L-methionine = N(5)-methyl-L-glutaminyl-[peptide chain release factor] + S-adenosyl-L-homocysteine + H(+). Its function is as follows. Methylates the class 1 translation termination release factors RF1/PrfA and RF2/PrfB on the glutamine residue of the universally conserved GGQ motif. This Chlorobaculum tepidum (strain ATCC 49652 / DSM 12025 / NBRC 103806 / TLS) (Chlorobium tepidum) protein is Release factor glutamine methyltransferase.